The chain runs to 201 residues: Ribosome maturation factor RimP (201 aa).

This sequence belongs to the RimP family.

It is found in the cytoplasm. In terms of biological role, required for maturation of 30S ribosomal subunits. The polypeptide is Ribosome maturation factor RimP (Rhizobium johnstonii (strain DSM 114642 / LMG 32736 / 3841) (Rhizobium leguminosarum bv. viciae)).